A 444-amino-acid chain; its full sequence is MKQRFIRQFTNLMSTSRPKVVANKYFTSNTAKDVWSLTNEAAAKAANNSKNQGRELINLGQGFFSYSPPQFAIKEAQKALDIPMVNQYSPTRGRPSLINSLIKLYSPIYNTELKAENVTVTTGANEGILSCLMGLLNAGDEVIVFEPFFDQYIPNIELCGGKVVYVPINPPKELDQRNTRGEEWTIDFEQFEKAITSKTKAVIINTPHNPIGKVFTREELTTLGNICVKHNVVIISDEVYEHLYFTDSFTRIATLSPEIGQLTLTVGSAGKSFAATGWRIGWVLSLNAELLSYAAKAHTRICFASPSPLQEACANSINDALKIGYFEKMRQEYINKFKIFTSIFDELGLPYTAPEGTYFVLVDFSKVKIPEDYPYPEEILNKGKDFRISHWLINELGVVAIPPTEFYIKEHEKAAENLLRFAVCKDDAYLENAVERLKLLKDYL.

N6-(pyridoxal phosphate)lysine is present on Lys-271.

Belongs to the class-I pyridoxal-phosphate-dependent aminotransferase family. Homodimer. It depends on pyridoxal 5'-phosphate as a cofactor.

It localises to the cytoplasm. It is found in the mitochondrion. The enzyme catalyses L-kynurenine + 2-oxoglutarate = kynurenate + L-glutamate + H2O. Its pathway is amino-acid degradation; L-kynurenine degradation; kynurenate from L-kynurenine: step 1/2. In terms of biological role, catalyzes the irreversible transamination of the L-tryptophan metabolite L-kynurenine to form kynurenic acid (KA). The protein is Probable kynurenine--oxoglutarate transaminase BNA3 (BNA3) of Saccharomyces cerevisiae (strain ATCC 204508 / S288c) (Baker's yeast).